Consider the following 218-residue polypeptide: MNNLSYLTKIPLIWVLLSVTLLSACSVAPPENFIPVQVDDVSNAQAWEMQGKLAVRTSKDKFSTNLYWFHTDKKNELTLTTMLGTTVLSLTTLEGEARLEVDGKVYQDKDAQRLLTRVTGWSIPVDALPLWITGRLSDDDELLVQDEQQRPMKLATQNPPPWEVEFISWQQQSGAELPRLLQLKREDLRLKIQISHWQALSAAHLLPSNQPEERLNEQ.

Residues 1 to 24 (MNNLSYLTKIPLIWVLLSVTLLSA) form the signal peptide. Cys-25 carries N-palmitoyl cysteine lipidation. Residue Cys-25 is the site of S-diacylglycerol cysteine attachment.

The protein belongs to the LolB family. Monomer.

It is found in the cell outer membrane. Functionally, plays a critical role in the incorporation of lipoproteins in the outer membrane after they are released by the LolA protein. The polypeptide is Outer-membrane lipoprotein LolB (Shewanella sediminis (strain HAW-EB3)).